A 640-amino-acid chain; its full sequence is 1-deoxy-D-xylulose-5-phosphate synthase (640 aa).

Residues His-79 and Ala-120 to Ser-122 contribute to the thiamine diphosphate site. Position 151 (Asp-151) interacts with Mg(2+). Thiamine diphosphate contacts are provided by residues Gly-152–Ala-153, Asn-180, Tyr-289, and Glu-371. Residue Asn-180 participates in Mg(2+) binding.

Belongs to the transketolase family. DXPS subfamily. As to quaternary structure, homodimer. Mg(2+) serves as cofactor. It depends on thiamine diphosphate as a cofactor.

The catalysed reaction is D-glyceraldehyde 3-phosphate + pyruvate + H(+) = 1-deoxy-D-xylulose 5-phosphate + CO2. It functions in the pathway metabolic intermediate biosynthesis; 1-deoxy-D-xylulose 5-phosphate biosynthesis; 1-deoxy-D-xylulose 5-phosphate from D-glyceraldehyde 3-phosphate and pyruvate: step 1/1. Functionally, catalyzes the acyloin condensation reaction between C atoms 2 and 3 of pyruvate and glyceraldehyde 3-phosphate to yield 1-deoxy-D-xylulose-5-phosphate (DXP). This Erythrobacter litoralis (strain HTCC2594) protein is 1-deoxy-D-xylulose-5-phosphate synthase.